A 478-amino-acid chain; its full sequence is CDK5 and ABL1 enzyme substrate 2 (478 aa).

The disordered stretch occupies residues 1 to 121 (MAAAAAGGAP…GLGLDGQRQR (121 aa)). Pro residues predominate over residues 11–24 (GPAPGPAGPPPPAA). Residues 25–35 (PTSAARAPPQA) show a composition bias toward low complexity. The segment covering 36–46 (LRRRGDSRRRQ) has biased composition (basic residues). The segment covering 69 to 92 (EKPPPPPAEAREPPAPPPPEPPTG) has biased composition (pro residues). Phosphoserine is present on residues Ser130 and Ser208. Positions 257-296 (SDSHGLLPTPRPSVPRTLPGSRHKPAPTKSAPASTELGSD) are disordered.

Belongs to the cyclin family. Binds to CDK3, CDK5 and ABL1. The C-terminal cyclin-box-like region binds to CDK5.

Functionally, unknown. Probably involved in G1-S cell cycle transition. This chain is CDK5 and ABL1 enzyme substrate 2 (CABLES2), found in Homo sapiens (Human).